A 375-amino-acid polypeptide reads, in one-letter code: Quinolinate synthase (375 aa).

Positions 47 and 64 each coordinate iminosuccinate. Cys110 serves as a coordination point for [4Fe-4S] cluster. Residues 144-146 (YVN) and Ser165 each bind iminosuccinate. Cys235 is a binding site for [4Fe-4S] cluster. Residues 261 to 263 (HPE) and Thr278 each bind iminosuccinate. Cys325 contributes to the [4Fe-4S] cluster binding site.

Belongs to the quinolinate synthase family. Type 3 subfamily. It depends on [4Fe-4S] cluster as a cofactor.

It localises to the cytoplasm. It carries out the reaction iminosuccinate + dihydroxyacetone phosphate = quinolinate + phosphate + 2 H2O + H(+). It participates in cofactor biosynthesis; NAD(+) biosynthesis; quinolinate from iminoaspartate: step 1/1. Its function is as follows. Catalyzes the condensation of iminoaspartate with dihydroxyacetone phosphate to form quinolinate. The protein is Quinolinate synthase of Herpetosiphon aurantiacus (strain ATCC 23779 / DSM 785 / 114-95).